A 225-amino-acid chain; its full sequence is 7-cyano-7-deazaguanine synthase (225 aa).

10–20 (VSGGLDSTTAL) contributes to the ATP binding site. Zn(2+) contacts are provided by cysteine 189, cysteine 199, cysteine 202, and cysteine 205.

This sequence belongs to the QueC family. The cofactor is Zn(2+).

The enzyme catalyses 7-carboxy-7-deazaguanine + NH4(+) + ATP = 7-cyano-7-deazaguanine + ADP + phosphate + H2O + H(+). The protein operates within purine metabolism; 7-cyano-7-deazaguanine biosynthesis. Its function is as follows. Catalyzes the ATP-dependent conversion of 7-carboxy-7-deazaguanine (CDG) to 7-cyano-7-deazaguanine (preQ(0)). The chain is 7-cyano-7-deazaguanine synthase from Saccharophagus degradans (strain 2-40 / ATCC 43961 / DSM 17024).